We begin with the raw amino-acid sequence, 443 residues long: Diels-Alderase poxQ (443 aa).

The signal sequence occupies residues 1–23 (MARIPLEFLSITLPVLLLAYCLA). N-linked (GlcNAc...) asparagine glycosylation is found at asparagine 78, asparagine 97, and asparagine 145.

It belongs to the Diels-Alderase family.

It functions in the pathway secondary metabolite biosynthesis. Diels-Alderase; part of the gene cluster that mediates the biosynthesis of oxaleimides, cytotoxic compounds containing an unusual disubstituted succinimide moiety. The first step of the pathway is provided by the HR-PKS poxF that serves in a new mode of collaborative biosynthesis with the PKS-NRPS poxE, by providing the olefin containing amino acid substrate via the synthesis of an ACP-bound dec-4-enoate. The cytochrome P450 monooxygenase poxM-catalyzed oxidation at the alpha-position creates the enzyme-bound 2-hydroxydec-4-enoyl-ACP thioester, which may be prone to spontaneous hydrolysis to yield 2-hydroxydec-4-enoic acid due to increased electrophilicity of the carbonyl. 2-hydroxydec-4-enoic acid can then be further oxidized by poxM to yield the alpha-ketoacid 2-oxodec-4-enoicacid, which is reductively aminated by the aminotransferase poxL to yield (S,E)-2-aminodec-4-enoic acid. The Hybrid PKS-NRPS synthetase poxE then performs condensation between the octaketide product of its PKS modules and the amino group of (S,E)-2-aminodec-4-enoic acid which is activated and incorporated by the adenylation domain. The resulting aminoacyl product can be cyclized by the Diels-Alderase PoxQ and reductively released by the reductive (R) domain of poxE to yield an aldehyde intermediate. The released aldehyde is then substrate for a Knoevenagel condensation by the hydrolyase poxO followed by an oxidation at the 5-position of the pyrrolidone ring. The presence of the olefin from the amino acid building block allows for migration of the substituted allyl group to occur. This allylic transposition reaction takes place in a conjugate addition, semipinacol-like fashion to yield a succinimide intermediate. Iterative two-electron oxidations of the C7 methyl of the succinimide intermediate to the carboxylic acid can be catalyzed by one of two remaining cytochrome P450 monooxygenasess poxC or poxD to yield oxaleimide A. Subsequent oxidation yields the maleimide scaffold oxaleimide I. Both oxaleimide A and oxaleimide I can undergo oxidative modifications in the decalin ring to yield the series of products oxaleimides B to H. The polypeptide is Diels-Alderase poxQ (Penicillium oxalicum (strain 114-2 / CGMCC 5302) (Penicillium decumbens)).